Here is a 125-residue protein sequence, read N- to C-terminus: MARIAGVDLPRDKRAEIGLTYIYGIGPTRAKEILAKTGVSPDTRIKDLNDSEVAALRQVVENDYQVEGDLRRLEAMSIKRLMDIGTVRGRRHRAGLPVRGQRTRTNARTRRGARKTVAGKKKATR.

The segment at 93–125 (RAGLPVRGQRTRTNARTRRGARKTVAGKKKATR) is disordered. Residues 101–125 (QRTRTNARTRRGARKTVAGKKKATR) show a composition bias toward basic residues.

Belongs to the universal ribosomal protein uS13 family. As to quaternary structure, part of the 30S ribosomal subunit. Forms a loose heterodimer with protein S19. Forms two bridges to the 50S subunit in the 70S ribosome.

Its function is as follows. Located at the top of the head of the 30S subunit, it contacts several helices of the 16S rRNA. In the 70S ribosome it contacts the 23S rRNA (bridge B1a) and protein L5 of the 50S subunit (bridge B1b), connecting the 2 subunits; these bridges are implicated in subunit movement. Contacts the tRNAs in the A and P-sites. The chain is Small ribosomal subunit protein uS13 from Synechococcus elongatus (strain ATCC 33912 / PCC 7942 / FACHB-805) (Anacystis nidulans R2).